Reading from the N-terminus, the 130-residue chain is Small ribosomal subunit protein uS9 (130 aa).

Belongs to the universal ribosomal protein uS9 family.

This is Small ribosomal subunit protein uS9 from Ralstonia nicotianae (strain ATCC BAA-1114 / GMI1000) (Ralstonia solanacearum).